We begin with the raw amino-acid sequence, 388 residues long: Putative 8-amino-7-oxononanoate synthase (388 aa).

Arg18 provides a ligand contact to substrate. Residue Gly105 to Tyr106 coordinates pyridoxal 5'-phosphate. His130 lines the substrate pocket. Residues Ser176, Asp201–His204, and Thr232–Lys235 each bind pyridoxal 5'-phosphate. Residue Lys235 is modified to N6-(pyridoxal phosphate)lysine. Residue Thr349 participates in substrate binding.

It belongs to the class-II pyridoxal-phosphate-dependent aminotransferase family. BioF subfamily. As to quaternary structure, homodimer. Pyridoxal 5'-phosphate is required as a cofactor.

It catalyses the reaction 6-carboxyhexanoyl-[ACP] + L-alanine + H(+) = (8S)-8-amino-7-oxononanoate + holo-[ACP] + CO2. The protein operates within cofactor biosynthesis; biotin biosynthesis. Functionally, catalyzes the decarboxylative condensation of pimeloyl-[acyl-carrier protein] and L-alanine to produce 8-amino-7-oxononanoate (AON), [acyl-carrier protein], and carbon dioxide. The polypeptide is Putative 8-amino-7-oxononanoate synthase (bioF) (Acetivibrio thermocellus (strain ATCC 27405 / DSM 1237 / JCM 9322 / NBRC 103400 / NCIMB 10682 / NRRL B-4536 / VPI 7372) (Clostridium thermocellum)).